We begin with the raw amino-acid sequence, 492 residues long: GTPase Der (492 aa).

2 consecutive EngA-type G domains span residues 3–167 and 207–382; these read FTLA…EKFE and LQVA…DVWN. GTP contacts are provided by residues 9–16, 56–60, 119–122, 213–220, 260–264, and 325–328; these read GRPNVGKS, DSAGL, NKSE, GRPNAGKS, DTAGM, and NKWD. The KH-like domain occupies 383-469; it reads RRVPTAALNR…RLTLRGQGDK (87 aa). The segment at 461–492 is disordered; it reads LTLRGQGDKNPYKGKKKSTPSRLRKHLEGRKS. Residues 472-492 show a composition bias toward basic residues; that stretch reads YKGKKKSTPSRLRKHLEGRKS.

Belongs to the TRAFAC class TrmE-Era-EngA-EngB-Septin-like GTPase superfamily. EngA (Der) GTPase family. As to quaternary structure, associates with the 50S ribosomal subunit.

Functionally, GTPase that plays an essential role in the late steps of ribosome biogenesis. The chain is GTPase Der from Ruegeria sp. (strain TM1040) (Silicibacter sp.).